Here is a 774-residue protein sequence, read N- to C-terminus: Beta-D-xylosidase 1 (774 aa).

A signal peptide spans methionine 1–serine 30. Residue asparagine 131 is glycosylated (N-linked (GlcNAc...) asparagine). Residue aspartate 296 is part of the active site. N-linked (GlcNAc...) asparagine glycosylation is present at asparagine 658.

The protein belongs to the glycosyl hydrolase 3 family. As to expression, expressed in leaves, stems, seedlings, roots, inflorescences, siliques and developing seeds. Expressed in the vasculature of the roots, leaves, flowers and silique. Expressed in tissues undergoing secondary cell wall thickening such as protoxylem, metaxylem, intrafascicular cambium and fibers.

It localises to the secreted. The protein localises to the extracellular space. Its subcellular location is the extracellular matrix. The catalysed reaction is Hydrolysis of terminal non-reducing alpha-L-arabinofuranoside residues in alpha-L-arabinosides.. In terms of biological role, involved in pectic arabinan modification in mucilage secretory cells. Also acts as a beta-D-xylosidase during the remodeling of xylans in vascular development. The protein is Beta-D-xylosidase 1 (BXL1) of Arabidopsis thaliana (Mouse-ear cress).